The following is a 361-amino-acid chain: GDP-mannose 4,6 dehydratase 1 (361 aa).

NADP(+)-binding positions include 23–28 (GITGQD), 79–80 (DL), 101–105 (LAAQS), and tyrosine 116. Serine 150 is a catalytic residue. Active-site nucleophile residues include glutamate 152 and tyrosine 173. NADP(+) is bound by residues lysine 177, histidine 203, and arginine 208.

This sequence belongs to the NAD(P)-dependent epimerase/dehydratase family. GDP-mannose 4,6-dehydratase subfamily. Homotetramer. The cofactor is NADP(+). As to expression, expressed in roots,stipules and pollen just before anthesis. Primarily localized to the root meristem and columella root cap. Not expressed in emerging lateral roots.

The catalysed reaction is GDP-alpha-D-mannose = GDP-4-dehydro-alpha-D-rhamnose + H2O. Its pathway is nucleotide-sugar biosynthesis; GDP-L-fucose biosynthesis via de novo pathway; GDP-L-fucose from GDP-alpha-D-mannose: step 1/2. In terms of biological role, catalyzes the conversion of GDP-D-mannose to GDP-4-dehydro-6-deoxy-D-mannose. This is GDP-mannose 4,6 dehydratase 1 (GMD1) from Arabidopsis thaliana (Mouse-ear cress).